We begin with the raw amino-acid sequence, 401 residues long: Anhydro-N-acetylmuramic acid kinase (401 aa).

25-32 (GTSLDGLD) serves as a coordination point for ATP.

This sequence belongs to the anhydro-N-acetylmuramic acid kinase family.

The catalysed reaction is 1,6-anhydro-N-acetyl-beta-muramate + ATP + H2O = N-acetyl-D-muramate 6-phosphate + ADP + H(+). It participates in amino-sugar metabolism; 1,6-anhydro-N-acetylmuramate degradation. The protein operates within cell wall biogenesis; peptidoglycan recycling. Functionally, catalyzes the specific phosphorylation of 1,6-anhydro-N-acetylmuramic acid (anhMurNAc) with the simultaneous cleavage of the 1,6-anhydro ring, generating MurNAc-6-P. Is required for the utilization of anhMurNAc either imported from the medium or derived from its own cell wall murein, and thus plays a role in cell wall recycling. In Pseudoalteromonas translucida (strain TAC 125), this protein is Anhydro-N-acetylmuramic acid kinase.